Here is a 278-residue protein sequence, read N- to C-terminus: Large ribosomal subunit protein uL2 (278 aa).

Positions 222 to 278 (GVVMNPVDHPHGGGEGRTSGGRHPVTPWGKPTKGAKTRKNKSTDKFIIRSRHERKKR) are disordered. Over residues 269–278 (IRSRHERKKR) the composition is skewed to basic residues.

The protein belongs to the universal ribosomal protein uL2 family. Part of the 50S ribosomal subunit. Forms a bridge to the 30S subunit in the 70S ribosome.

Its function is as follows. One of the primary rRNA binding proteins. Required for association of the 30S and 50S subunits to form the 70S ribosome, for tRNA binding and peptide bond formation. It has been suggested to have peptidyltransferase activity; this is somewhat controversial. Makes several contacts with the 16S rRNA in the 70S ribosome. This is Large ribosomal subunit protein uL2 from Maricaulis maris (strain MCS10) (Caulobacter maris).